The sequence spans 161 residues: Cyclic pyranopterin monophosphate synthase (161 aa).

Substrate contacts are provided by residues 75 to 77 (LCH) and 113 to 114 (ME). Asp-128 is a catalytic residue.

This sequence belongs to the MoaC family. In terms of assembly, homohexamer; trimer of dimers.

It carries out the reaction (8S)-3',8-cyclo-7,8-dihydroguanosine 5'-triphosphate = cyclic pyranopterin phosphate + diphosphate. The protein operates within cofactor biosynthesis; molybdopterin biosynthesis. Functionally, catalyzes the conversion of (8S)-3',8-cyclo-7,8-dihydroguanosine 5'-triphosphate to cyclic pyranopterin monophosphate (cPMP). This is Cyclic pyranopterin monophosphate synthase from Escherichia coli O139:H28 (strain E24377A / ETEC).